The following is a 351-amino-acid chain: Dihydroorotate dehydrogenase (quinone) (351 aa).

FMN contacts are provided by residues 67–71 (AGFDK) and Thr-91. Lys-71 is a binding site for substrate. Residue 116–120 (NAMGF) coordinates substrate. FMN contacts are provided by Asn-145 and Asn-178. Asn-178 is a binding site for substrate. Catalysis depends on Ser-181, which acts as the Nucleophile. Asn-183 provides a ligand contact to substrate. Residues Lys-214 and Thr-242 each coordinate FMN. 243 to 244 (NT) provides a ligand contact to substrate. Residues Gly-262, Gly-291, and 312 to 313 (YS) each bind FMN.

This sequence belongs to the dihydroorotate dehydrogenase family. Type 2 subfamily. As to quaternary structure, monomer. FMN is required as a cofactor.

The protein localises to the cell membrane. It carries out the reaction (S)-dihydroorotate + a quinone = orotate + a quinol. It functions in the pathway pyrimidine metabolism; UMP biosynthesis via de novo pathway; orotate from (S)-dihydroorotate (quinone route): step 1/1. Catalyzes the conversion of dihydroorotate to orotate with quinone as electron acceptor. The sequence is that of Dihydroorotate dehydrogenase (quinone) from Helicobacter acinonychis (strain Sheeba).